A 208-amino-acid chain; its full sequence is Large ribosomal subunit protein uL3 (208 aa).

A disordered region spans residues 134 to 153; the sequence is SKFHREAGSTGQCTSPGRTF.

Belongs to the universal ribosomal protein uL3 family. Part of the 50S ribosomal subunit. Forms a cluster with proteins L14 and L19.

In terms of biological role, one of the primary rRNA binding proteins, it binds directly near the 3'-end of the 23S rRNA, where it nucleates assembly of the 50S subunit. In Treponema pallidum (strain Nichols), this protein is Large ribosomal subunit protein uL3.